The chain runs to 100 residues: Replication restart protein PriB (100 aa).

In terms of domain architecture, SSB spans 1–100; it reads MTNRMELSGT…VLHADNITQI (100 aa).

This sequence belongs to the PriB family. As to quaternary structure, homodimer. Interacts with PriA and DnaT. Component of the replication restart primosome. Primosome assembly occurs via a 'hand-off' mechanism. PriA binds to replication forks, subsequently PriB then DnaT bind; DnaT then displaces ssDNA to generate the helicase loading substrate.

Its function is as follows. Involved in the restart of stalled replication forks, which reloads the replicative helicase on sites other than the origin of replication; the PriA-PriB pathway is the major replication restart pathway. During primosome assembly it facilitates complex formation between PriA and DnaT on DNA; stabilizes PriA on DNA. Stimulates the DNA unwinding activity of PriA helicase. This Vibrio parahaemolyticus serotype O3:K6 (strain RIMD 2210633) protein is Replication restart protein PriB.